The sequence spans 199 residues: dITP/XTP pyrophosphatase (199 aa).

8 to 13 (TSNKNK) contributes to the substrate binding site. Residues E40 and D68 each contribute to the Mg(2+) site. The active-site Proton acceptor is the D68. Substrate-binding positions include S69, 154–157 (FGYD), K177, and 182–183 (HR).

The protein belongs to the HAM1 NTPase family. Homodimer. Mg(2+) is required as a cofactor.

The catalysed reaction is XTP + H2O = XMP + diphosphate + H(+). It carries out the reaction dITP + H2O = dIMP + diphosphate + H(+). It catalyses the reaction ITP + H2O = IMP + diphosphate + H(+). Functionally, pyrophosphatase that catalyzes the hydrolysis of nucleoside triphosphates to their monophosphate derivatives, with a high preference for the non-canonical purine nucleotides XTP (xanthosine triphosphate), dITP (deoxyinosine triphosphate) and ITP. Seems to function as a house-cleaning enzyme that removes non-canonical purine nucleotides from the nucleotide pool, thus preventing their incorporation into DNA/RNA and avoiding chromosomal lesions. In Wigglesworthia glossinidia brevipalpis, this protein is dITP/XTP pyrophosphatase.